The chain runs to 659 residues: Probable acyl-coenzyme A oxidase acox-1.5 (659 aa).

FAD contacts are provided by residues 148 to 151 (YAQT), 156 to 157 (GT), and Gly-190. Residues 284–287 (KVGY) and Arg-294 contribute to the substrate site. FAD contacts are provided by residues Arg-319 and 339–342 (QQYR). 2 residues coordinate ATP: His-395 and Gln-403. Gly-410 lines the FAD pocket. Residue 432-433 (YE) participates in substrate binding. Glu-433 serves as the catalytic Proton acceptor. Glu-435 serves as a coordination point for FAD. 524 to 527 (KAAR) contacts ATP. A Microbody targeting signal motif is present at residues 657 to 659 (SKL).

Belongs to the acyl-CoA oxidase family. Homodimer. It depends on FAD as a cofactor.

The protein localises to the peroxisome. Its pathway is lipid metabolism; peroxisomal fatty acid beta-oxidation. Activated by ATP. ATP binding leads to a conformational change that promotes FAD cofactor binding and enzyme activity. ATP binding likely occurs during acox-1.5 folding and/or dimer formation. Involved in the first step of peroxisomal beta-oxidation by catalyzing the desaturation of fatty acid-derived side chains. This chain is Probable acyl-coenzyme A oxidase acox-1.5, found in Caenorhabditis elegans.